We begin with the raw amino-acid sequence, 482 residues long: tRNA sulfurtransferase (482 aa).

The THUMP domain occupies 61–165 (LAIRDALTRI…DDRLLLIKGR (105 aa)). ATP-binding positions include 183-184 (LI), Lys265, Gly287, and Gln296. Residues Cys344 and Cys456 are joined by a disulfide bond. The Rhodanese domain maps to 404-482 (FGPNDVILDI…GFNNVKVYRP (79 aa)). Cys456 (cysteine persulfide intermediate) is an active-site residue.

It belongs to the ThiI family.

Its subcellular location is the cytoplasm. The enzyme catalyses [ThiI sulfur-carrier protein]-S-sulfanyl-L-cysteine + a uridine in tRNA + 2 reduced [2Fe-2S]-[ferredoxin] + ATP + H(+) = [ThiI sulfur-carrier protein]-L-cysteine + a 4-thiouridine in tRNA + 2 oxidized [2Fe-2S]-[ferredoxin] + AMP + diphosphate. It catalyses the reaction [ThiS sulfur-carrier protein]-C-terminal Gly-Gly-AMP + S-sulfanyl-L-cysteinyl-[cysteine desulfurase] + AH2 = [ThiS sulfur-carrier protein]-C-terminal-Gly-aminoethanethioate + L-cysteinyl-[cysteine desulfurase] + A + AMP + 2 H(+). Its pathway is cofactor biosynthesis; thiamine diphosphate biosynthesis. In terms of biological role, catalyzes the ATP-dependent transfer of a sulfur to tRNA to produce 4-thiouridine in position 8 of tRNAs, which functions as a near-UV photosensor. Also catalyzes the transfer of sulfur to the sulfur carrier protein ThiS, forming ThiS-thiocarboxylate. This is a step in the synthesis of thiazole, in the thiamine biosynthesis pathway. The sulfur is donated as persulfide by IscS. This is tRNA sulfurtransferase from Escherichia coli O127:H6 (strain E2348/69 / EPEC).